Consider the following 258-residue polypeptide: 1-(5-phosphoribosyl)-5-[(5-phosphoribosylamino)methylideneamino] imidazole-4-carboxamide isomerase (258 aa).

The active-site Proton acceptor is the Asp-9. Asp-131 (proton donor) is an active-site residue.

This sequence belongs to the HisA/HisF family.

The protein localises to the cytoplasm. The enzyme catalyses 1-(5-phospho-beta-D-ribosyl)-5-[(5-phospho-beta-D-ribosylamino)methylideneamino]imidazole-4-carboxamide = 5-[(5-phospho-1-deoxy-D-ribulos-1-ylimino)methylamino]-1-(5-phospho-beta-D-ribosyl)imidazole-4-carboxamide. It functions in the pathway amino-acid biosynthesis; L-histidine biosynthesis; L-histidine from 5-phospho-alpha-D-ribose 1-diphosphate: step 4/9. The chain is 1-(5-phosphoribosyl)-5-[(5-phosphoribosylamino)methylideneamino] imidazole-4-carboxamide isomerase from Salinibacter ruber (strain DSM 13855 / M31).